Reading from the N-terminus, the 218-residue chain is Runt-related transcription factor 2 (218 aa).

Residues 67 to 195 (RGHKFYLEKK…TVDGPREPRR (129 aa)) enclose the Runt domain. The interval 122-138 (VMAGNDENYSAELRNAS) is required for interaction with FOXO1. Residues 189–218 (GPREPRRHRQKLDDSKPSLFSDRLSDLGRI) form a disordered region. Lys-204 is covalently cross-linked (Glycyl lysine isopeptide (Lys-Gly) (interchain with G-Cter in SUMO2)).

As to quaternary structure, heterodimer of an alpha and a beta subunit. The alpha subunit binds DNA as a monomer and through the Runt domain. DNA-binding is increased by heterodimerization. Interacts with XRCC6 (Ku70) and XRCC5 (Ku80). Interacts with CCNB1, KAT6A and KAT6B. Interacts with HIVEP3. Interacts with IFI204. Interaction with SATB2; the interaction results in enhanced DNA binding and transactivation by these transcription factors. Binds to HIPK3. Interacts with FOXO1 (via a C-terminal region); the interaction inhibits RUNX2 transcriptional activity towards BGLAP. Interacts with FOXP3. Interacts with TMEM119. Interacts with OLFM2. Interacts with IPO7; the interaction inhibits RUNX2 nuclear translocation in osteoblasts. Phosphorylated; probably by MAP kinases (MAPK). Phosphorylation by HIPK3 is required for the SPEN/MINT and FGF2 transactivation during osteoblastic differentiation.

The protein resides in the nucleus. It localises to the cytoplasm. Transcription factor involved in osteoblastic differentiation and skeletal morphogenesis. Essential for the maturation of osteoblasts and both intramembranous and endochondral ossification. CBF binds to the core site, 5'-PYGPYGGT-3', of a number of enhancers and promoters, including murine leukemia virus, polyomavirus enhancer, T-cell receptor enhancers, osteocalcin, osteopontin, bone sialoprotein, alpha 1(I) collagen, LCK, IL-3 and GM-CSF promoters. Inhibits KAT6B-dependent transcriptional activation. In osteoblasts, supports transcription activation: synergizes with SPEN/MINT to enhance FGFR2-mediated activation of the osteocalcin FGF-responsive element (OCFRE). The sequence is that of Runt-related transcription factor 2 (Runx2) from Rattus norvegicus (Rat).